The sequence spans 189 residues: Probable nicotinate-nucleotide adenylyltransferase (189 aa).

It belongs to the NadD family.

It catalyses the reaction nicotinate beta-D-ribonucleotide + ATP + H(+) = deamido-NAD(+) + diphosphate. Its pathway is cofactor biosynthesis; NAD(+) biosynthesis; deamido-NAD(+) from nicotinate D-ribonucleotide: step 1/1. In terms of biological role, catalyzes the reversible adenylation of nicotinate mononucleotide (NaMN) to nicotinic acid adenine dinucleotide (NaAD). This is Probable nicotinate-nucleotide adenylyltransferase from Staphylococcus aureus (strain MRSA252).